Here is a 160-residue protein sequence, read N- to C-terminus: Cytochrome b6-f complex subunit 4 (160 aa).

The next 3 helical transmembrane spans lie at 36-56 (ILYM…GLAI), 95-115 (LLGI…PFIE), and 127-147 (PIAM…GAGA).

Belongs to the cytochrome b family. PetD subfamily. As to quaternary structure, the 4 large subunits of the cytochrome b6-f complex are cytochrome b6, subunit IV (17 kDa polypeptide, PetD), cytochrome f and the Rieske protein, while the 4 small subunits are PetG, PetL, PetM and PetN. The complex functions as a dimer.

It is found in the cellular thylakoid membrane. In terms of biological role, component of the cytochrome b6-f complex, which mediates electron transfer between photosystem II (PSII) and photosystem I (PSI), cyclic electron flow around PSI, and state transitions. This chain is Cytochrome b6-f complex subunit 4, found in Synechocystis sp. (strain ATCC 27184 / PCC 6803 / Kazusa).